Here is a 41-residue protein sequence, read N- to C-terminus: Photosystem I reaction center subunit IX (41 aa).

Residues 7-27 traverse the membrane as a helical segment; sequence YLSTAPVLLTLWMTFTAGFII.

This sequence belongs to the PsaJ family.

The protein localises to the plastid. The protein resides in the chloroplast thylakoid membrane. Functionally, may help in the organization of the PsaE and PsaF subunits. In Thalassiosira pseudonana (Marine diatom), this protein is Photosystem I reaction center subunit IX.